A 371-amino-acid chain; its full sequence is Lipoyl synthase, mitochondrial (371 aa).

The N-terminal 24 residues, 1-24 (MLSRFKCSRLQLQKRAISVTKATT), are a transit peptide targeting the mitochondrion. The span at 20–29 (TKATTTTASQ) shows a compositional bias: polar residues. Residues 20 to 42 (TKATTTTASQPKRRRTTTFSDAL) form a disordered region. [4Fe-4S] cluster-binding residues include cysteine 107, cysteine 112, cysteine 118, cysteine 138, cysteine 142, cysteine 145, and serine 353. The region spanning 121–342 (GGDSSKATAT…RDKALELGFL (222 aa)) is the Radical SAM core domain.

The protein belongs to the radical SAM superfamily. Lipoyl synthase family. [4Fe-4S] cluster serves as cofactor.

The protein resides in the mitochondrion. The enzyme catalyses [[Fe-S] cluster scaffold protein carrying a second [4Fe-4S](2+) cluster] + N(6)-octanoyl-L-lysyl-[protein] + 2 oxidized [2Fe-2S]-[ferredoxin] + 2 S-adenosyl-L-methionine + 4 H(+) = [[Fe-S] cluster scaffold protein] + N(6)-[(R)-dihydrolipoyl]-L-lysyl-[protein] + 4 Fe(3+) + 2 hydrogen sulfide + 2 5'-deoxyadenosine + 2 L-methionine + 2 reduced [2Fe-2S]-[ferredoxin]. The protein operates within protein modification; protein lipoylation via endogenous pathway; protein N(6)-(lipoyl)lysine from octanoyl-[acyl-carrier-protein]: step 2/2. Catalyzes the radical-mediated insertion of two sulfur atoms into the C-6 and C-8 positions of the octanoyl moiety bound to the lipoyl domains of lipoate-dependent enzymes, thereby converting the octanoylated domains into lipoylated derivatives. This chain is Lipoyl synthase, mitochondrial, found in Lachancea thermotolerans (strain ATCC 56472 / CBS 6340 / NRRL Y-8284) (Yeast).